The following is a 325-amino-acid chain: Delta(1)-pyrroline-2-carboxylate reductase (325 aa).

The protein belongs to the ornithine cyclodeaminase/mu-crystallin family.

The enzyme catalyses L-proline + NAD(+) = 1-pyrroline-2-carboxylate + NADH + H(+). It catalyses the reaction L-proline + NADP(+) = 1-pyrroline-2-carboxylate + NADPH + H(+). Catalyzes the reduction of Delta(1)-pyrroline-2-carboxylate (Pyr2C) to L-proline, using preferentially NADPH over NADH as the electron donor. Is likely involved in a degradation pathway that converts trans-3-hydroxy-L-proline (t3LHyp) to L-proline. In Bacillus cereus (strain ATCC 10987 / NRS 248), this protein is Delta(1)-pyrroline-2-carboxylate reductase.